A 215-amino-acid chain; its full sequence is Sodium channel regulatory subunit beta-3 (215 aa).

An N-terminal signal peptide occupies residues 1–22; the sequence is MPAFNRLFPLASLLLILWVGVC. The Extracellular portion of the chain corresponds to 23–156; sequence FPVCVEVPSE…EEAGEDFTSV (134 aa). 2 cysteine pairs are disulfide-bonded: cysteine 26/cysteine 48 and cysteine 45/cysteine 120. Residues 32–154 enclose the Ig-like C2-type domain; the sequence is ETEAVQGNPM…VTEEAGEDFT (123 aa). Residues asparagine 95, asparagine 109, asparagine 113, and asparagine 121 are each glycosylated (N-linked (GlcNAc...) asparagine). The helical transmembrane segment at 157–178 threads the bilayer; sequence VSEIMMYILLVFLTLWLLIEMI. Topologically, residues 179–215 are cytoplasmic; the sequence is YCYRKVSKAEEAAQENASDYLAIPSENKENSAVPVEE.

This sequence belongs to the sodium channel auxiliary subunit SCN3B (TC 8.A.17) family. As to quaternary structure, a voltage-gated sodium (Nav) channel consists of an ion-conducting pore-forming alpha subunit functional on its own that is regulated by one or more beta subunits. Forms homodimers and homotrimers. SCN3B is non-covalently associated with alpha subunits and induces the formation of alpha subunit oligomers, including trimers. Interacts with SCN5A/Nav1.5; regulatory subunit of SCN5A/Nav1.5. Interacts with SCN7A/Nav2.1; probable regulatory subunit of SCN7A/Nav2.1. Interacts with SCN10A; regulatory subunit of SCN10A/Nav1.8. Interacts with NFASC; probably involved in targeting the sodium channels to the nodes of Ranvier. In terms of processing, intramolecular disulfide bonds favor the voltage-gated sodium channel oligomeric complex assembly. N-glycosylated.

The protein resides in the cell membrane. Functionally, regulatory subunit of multiple voltage-gated sodium (Nav) channels directly mediating the depolarization of excitable membranes. Navs, also called VGSCs (voltage-gated sodium channels) or VDSCs (voltage-dependent sodium channels), operate by switching between closed and open conformations depending on the voltage difference across the membrane. In the open conformation they allow Na(+) ions to selectively pass through the pore, along their electrochemical gradient. The influx of Na+ ions provokes membrane depolarization, initiating the propagation of electrical signals throughout cells and tissues. The accessory beta subunits participate in localization and functional modulation of the Nav channels. Modulates the activity of SCN2A/Nav1.2, causing a hyperpolarizing shift in the voltage-dependence of inactivation of the channel and increasing the fraction of channels operating in the fast gating mode. Modulates the activity of SCN5A/Nav1.5. Could also regulate the atypical sodium channel SCN7A/Nav2.1. Modulates the activity of SCN10A/Nav1.8, regulating its oligomerization and accelerating the recovery from inactivation. This chain is Sodium channel regulatory subunit beta-3, found in Bos taurus (Bovine).